The primary structure comprises 89 residues: Transcriptional regulator WhiB2 (89 aa).

Over residues 1–15 the composition is skewed to pro residues; it reads MVPEAPAPFEEPLPP. Residues 1-24 form a disordered region; it reads MVPEAPAPFEEPLPPEATDQWQDR. The 4Fe-4S Wbl-type domain occupies 26 to 83; the sequence is LCAQTDPEAFFPEKGGSTREAKKICMGCEVRHECLEYALAHDERFGIWGGLSERERRR. C27 serves as a coordination point for [4Fe-4S] cluster. S42 carries the phosphoserine modification. Residues C50, C53, and C59 each contribute to the [4Fe-4S] cluster site.

This sequence belongs to the WhiB family. Requires [4Fe-4S] cluster as cofactor. In terms of processing, may be phosphorylated, possibly on Ser-42. The cluster is degraded quickly in the presence of air. Upon cluster removal intramolecular disulfide bonds are formed. Post-translationally, the Fe-S cluster can be nitrosylated by nitric oxide (NO).

It is found in the cytoplasm. Functionally, acts as a transcriptional regulator. Probably redox-responsive. The apo- but not holo-form probably binds DNA. Its function is as follows. The apo-form functions as a chaperone, preventing aggregation or helping in correct refolding of a number of substrates; this activity does not require ATP or the ability to bind a Fe-S cluster. Chaperone activity is insensitive to the redox state of its cysteine residues. The apo-form has no protein disulfide reductase activity. The apo-form binds to its own promoter. This is Transcriptional regulator WhiB2 (whiB2) from Mycobacterium tuberculosis (strain ATCC 25618 / H37Rv).